The primary structure comprises 74 residues: UPF0435 protein GWCH70_0415 (74 aa).

Belongs to the UPF0435 family.

This Geobacillus sp. (strain WCH70) protein is UPF0435 protein GWCH70_0415.